The chain runs to 126 residues: RxLR effector protein BLR31 (126 aa).

A signal peptide spans 1–22; sequence MLLSRAISVLALLACIRCGVHA. The RxLR-dEER motif lies at 44-58; it reads RLLRTSVDFKDSEER.

Belongs to the RxLR effector family.

The protein localises to the secreted. Its subcellular location is the host cell. In terms of biological role, secreted effector that triggers a hypersensitive response (HR) in 3 Lactuca saligna accessions (CGN05947, CGN05310, CGN05304). In Bremia lactucae (Lettuce downy mildew), this protein is RxLR effector protein BLR31.